We begin with the raw amino-acid sequence, 674 residues long: Tripartite terminase subunit 3 (674 aa).

Residues 212-219 carry the Walker A motif motif; that stretch reads VPRRHGKT. The Walker B motif signature appears at 305–310; the sequence is LLLVDE. The active-site For ATPase activity is glutamate 310. Residues aspartate 463 and glutamate 534 each act as for nuclease activity in the active site. Residues 580–600 are required for interaction with UL56 and DNA packaging; it reads GRDKALAVEQFISRFNSGYIK. Aspartate 651 serves as the catalytic For nuclease activity.

This sequence belongs to the herpesviridae TRM3 protein family. Interacts with the terminase subunits TRM1 and TRM2. Interacts with portal protein.

The protein resides in the host nucleus. Functionally, component of the molecular motor that translocates viral genomic DNA in empty capsid during DNA packaging. Forms a tripartite terminase complex together with TRM1 and TRM2 in the host cytoplasm. Once the complex reaches the host nucleus, it interacts with the capsid portal vertex. This portal forms a ring in which genomic DNA is translocated into the capsid. TRM3 carries an RNase H-like nuclease activity that plays an important role for the cleavage of concatemeric viral DNA into unit length genomes. The sequence is that of Tripartite terminase subunit 3 from Homo sapiens (Human).